Consider the following 336-residue polypeptide: Shematrin-like protein 1 (336 aa).

Residues M1 to A16 form the signal peptide.

In terms of tissue distribution, prismatic layer of shell (at protein level). Expressed primarily in the mantle with highest level in the mantle edge and lower level in the mantle pallium.

The protein localises to the secreted. The polypeptide is Shematrin-like protein 1 (Pinctada maxima (Silver-lipped pearl oyster)).